Consider the following 444-residue polypeptide: Serine--tRNA ligase (444 aa).

Residue 248–250 (TSE) participates in L-serine binding. Residue 279–281 (RSE) participates in ATP binding. E302 is a binding site for L-serine. 366–369 (EISS) contacts ATP. S401 contacts L-serine.

The protein belongs to the class-II aminoacyl-tRNA synthetase family. Type-1 seryl-tRNA synthetase subfamily. In terms of assembly, homodimer. The tRNA molecule binds across the dimer.

The protein resides in the cytoplasm. It catalyses the reaction tRNA(Ser) + L-serine + ATP = L-seryl-tRNA(Ser) + AMP + diphosphate + H(+). It carries out the reaction tRNA(Sec) + L-serine + ATP = L-seryl-tRNA(Sec) + AMP + diphosphate + H(+). Its pathway is aminoacyl-tRNA biosynthesis; selenocysteinyl-tRNA(Sec) biosynthesis; L-seryl-tRNA(Sec) from L-serine and tRNA(Sec): step 1/1. In terms of biological role, catalyzes the attachment of serine to tRNA(Ser). Is also able to aminoacylate tRNA(Sec) with serine, to form the misacylated tRNA L-seryl-tRNA(Sec), which will be further converted into selenocysteinyl-tRNA(Sec). The protein is Serine--tRNA ligase of Polaromonas naphthalenivorans (strain CJ2).